We begin with the raw amino-acid sequence, 264 residues long: 5'-nucleotidase SurE (264 aa).

A divalent metal cation-binding residues include Asp10, Asp11, Ser43, and Asn99.

It belongs to the SurE nucleotidase family. A divalent metal cation is required as a cofactor.

The protein localises to the cytoplasm. The enzyme catalyses a ribonucleoside 5'-phosphate + H2O = a ribonucleoside + phosphate. In terms of biological role, nucleotidase that shows phosphatase activity on nucleoside 5'-monophosphates. The polypeptide is 5'-nucleotidase SurE (Methanococcus maripaludis (strain C5 / ATCC BAA-1333)).